The following is a 163-amino-acid chain: Pheromone-binding protein (163 aa).

The N-terminal stretch at 1 to 21 is a signal peptide; sequence MLRKISLLLLPVFVAINLVHS. Intrachain disulfides connect Cys-40–Cys-75, Cys-71–Cys-129, and Cys-118–Cys-138.

The protein belongs to the PBP/GOBP family. As to quaternary structure, homodimer. Antenna.

Its function is as follows. This major soluble protein in olfactory sensilla of male moths might serve to solubilize the extremely hydrophobic pheromone molecules and to transport pheromone through the aqueous lymph to receptors located on olfactory cilia. This Antheraea polyphemus (Polyphemus moth) protein is Pheromone-binding protein.